The chain runs to 354 residues: Uroporphyrinogen decarboxylase (354 aa).

Residues 27 to 31 (RQAGR), aspartate 77, tyrosine 154, threonine 209, and histidine 327 contribute to the substrate site.

It belongs to the uroporphyrinogen decarboxylase family. Homodimer.

Its subcellular location is the cytoplasm. It catalyses the reaction uroporphyrinogen III + 4 H(+) = coproporphyrinogen III + 4 CO2. It functions in the pathway porphyrin-containing compound metabolism; protoporphyrin-IX biosynthesis; coproporphyrinogen-III from 5-aminolevulinate: step 4/4. Catalyzes the decarboxylation of four acetate groups of uroporphyrinogen-III to yield coproporphyrinogen-III. This is Uroporphyrinogen decarboxylase from Klebsiella pneumoniae subsp. pneumoniae (strain ATCC 700721 / MGH 78578).